The sequence spans 301 residues: Probable alpha-L-glutamate ligase 1 (301 aa).

The region spanning 104-287 (LQLLSRKGIG…VTEPIVEYIE (184 aa)) is the ATP-grasp domain. ATP contacts are provided by residues K141, 178–179 (EY), D187, and 211–213 (RSN). Mg(2+) contacts are provided by D248, E260, and N262. Mn(2+) contacts are provided by D248, E260, and N262.

It belongs to the RimK family. It depends on Mg(2+) as a cofactor. Mn(2+) serves as cofactor.

This Shewanella sp. (strain ANA-3) protein is Probable alpha-L-glutamate ligase 1.